The chain runs to 247 residues: UPF0259 membrane protein BUAP5A_271 (247 aa).

Transmembrane regions (helical) follow at residues Ile20–Phe40, Ile85–Val105, Ile114–Leu134, Phe137–Leu157, Ile188–Ala208, and Leu218–Phe238.

Belongs to the UPF0259 family.

The protein resides in the cell membrane. In Buchnera aphidicola subsp. Acyrthosiphon pisum (strain 5A), this protein is UPF0259 membrane protein BUAP5A_271.